The chain runs to 632 residues: Fem-3 mRNA-binding factor 2 (632 aa).

A compositionally biased stretch (basic residues) spans 1–11 (MDQSKMRRTNQ). A disordered region spans residues 1 to 37 (MDQSKMRRTNQFRKTSQKPPSTGIDSYPTPAQSPMAQ). A compositionally biased stretch (polar residues) spans 12 to 35 (FRKTSQKPPSTGIDSYPTPAQSPM). The PUM-HD domain occupies 162 to 566 (TRSNNVLPTW…KMIETLANLR (405 aa)). Pumilio repeat units lie at residues 187-225 (EVLD…QLFE), 226-264 (QVIG…GYTK), 271-307 (NFIS…KLVQ), 308-332 (ALPR…QKVV), 345-384 (DFVA…DLTS), 400-436 (SVTN…CIIE), 438-473 (CLMR…EMMD), and 484-521 (DTGK…RQTK). The tract at residues 609-632 (MLEPRSNKSSVSVKFSSSGSHGDD) is disordered. A compositionally biased stretch (low complexity) spans 615-632 (NKSSVSVKFSSSGSHGDD).

In terms of assembly, interacts (via C-terminus) with gld-3 isoform A in an RNA-independent manner. Interacts with dlc-1, and is required for the localization of fbf-2 to P granules. Interacts (via RNA-binding domain) with lst-1, probably displaces bound auto-inhibitory C-terminal tail and alters its RNA-binding affinity. As to expression, expressed specifically in the germline (at protein level).

It is found in the cytoplasm. Its subcellular location is the cytoplasmic granule. RNA-binding protein that binds to the consensus sequence 5'-UGUGCCAUA-3' in mRNA 3'-UTRs. Involved in the control of stem cells and sex determination in the C.elegans hermaphrodite germline. May also play a role in the hermaphrodite germline proliferation and oogenesis. By binding to the 3'-UTR, represses phosphatase lip-1 expression in the distal part of the germline mitotic zone. Binds specifically to the regulatory region of fem-3 3'-UTR and mediates the sperm/oocyte switch. Negatively regulates gld-3 expression possibly by directly binding to two sites within the gld-3 isoform b 3'-UTR. Suppresses germline tumor formation by preventing the dedifferentiation of secondary spermatocytes. C-terminal disordered region probably auto-inhibits RNA binding; auto-inhibition may be reversed by interaction with lst-1. The protein is Fem-3 mRNA-binding factor 2 of Caenorhabditis elegans.